Consider the following 406-residue polypeptide: Cysteine desulfurase (406 aa).

Lys226 bears the N6-(pyridoxal phosphate)lysine mark. The active-site Cysteine persulfide intermediate is the Cys364.

Belongs to the class-V pyridoxal-phosphate-dependent aminotransferase family. Csd subfamily. In terms of assembly, homodimer. Interacts with SufE and the SufBCD complex composed of SufB, SufC and SufD. The interaction with SufE is required to mediate the direct transfer of the sulfur atom from the S-sulfanylcysteine. Pyridoxal 5'-phosphate is required as a cofactor.

It localises to the cytoplasm. The catalysed reaction is (sulfur carrier)-H + L-cysteine = (sulfur carrier)-SH + L-alanine. It catalyses the reaction L-selenocysteine + AH2 = hydrogenselenide + L-alanine + A + H(+). It participates in cofactor biosynthesis; iron-sulfur cluster biosynthesis. Functionally, cysteine desulfurases mobilize the sulfur from L-cysteine to yield L-alanine, an essential step in sulfur metabolism for biosynthesis of a variety of sulfur-containing biomolecules. Component of the suf operon, which is activated and required under specific conditions such as oxidative stress and iron limitation. Acts as a potent selenocysteine lyase in vitro, that mobilizes selenium from L-selenocysteine. Selenocysteine lyase activity is however unsure in vivo. The polypeptide is Cysteine desulfurase (Cronobacter sakazakii (strain ATCC BAA-894) (Enterobacter sakazakii)).